A 383-amino-acid chain; its full sequence is 1-deoxy-D-xylulose 5-phosphate reductoisomerase (383 aa).

Residues Thr-10, Gly-11, Ser-12, Ile-13, Gly-36, Lys-37, Asn-38, and Asn-122 each coordinate NADPH. Lys-123 provides a ligand contact to 1-deoxy-D-xylulose 5-phosphate. Glu-124 is a binding site for NADPH. Asp-148 is a Mn(2+) binding site. The 1-deoxy-D-xylulose 5-phosphate site is built by Ser-149, Glu-150, Ser-174, and His-197. Glu-150 provides a ligand contact to Mn(2+). Gly-203 is an NADPH binding site. The 1-deoxy-D-xylulose 5-phosphate site is built by Ser-210, Asn-215, Lys-216, and Glu-219. Glu-219 is a binding site for Mn(2+).

Belongs to the DXR family. The cofactor is Mg(2+). Mn(2+) serves as cofactor.

It catalyses the reaction 2-C-methyl-D-erythritol 4-phosphate + NADP(+) = 1-deoxy-D-xylulose 5-phosphate + NADPH + H(+). It participates in isoprenoid biosynthesis; isopentenyl diphosphate biosynthesis via DXP pathway; isopentenyl diphosphate from 1-deoxy-D-xylulose 5-phosphate: step 1/6. Its function is as follows. Catalyzes the NADPH-dependent rearrangement and reduction of 1-deoxy-D-xylulose-5-phosphate (DXP) to 2-C-methyl-D-erythritol 4-phosphate (MEP). The chain is 1-deoxy-D-xylulose 5-phosphate reductoisomerase from Bacillus velezensis (strain DSM 23117 / BGSC 10A6 / LMG 26770 / FZB42) (Bacillus amyloliquefaciens subsp. plantarum).